Here is a 316-residue protein sequence, read N- to C-terminus: Ribonuclease Z (316 aa).

Zn(2+) contacts are provided by His-61, His-63, Asp-65, His-66, His-152, Asp-220, and His-279. Asp-65 (proton acceptor) is an active-site residue.

It belongs to the RNase Z family. Homodimer. Requires Zn(2+) as cofactor.

The catalysed reaction is Endonucleolytic cleavage of RNA, removing extra 3' nucleotides from tRNA precursor, generating 3' termini of tRNAs. A 3'-hydroxy group is left at the tRNA terminus and a 5'-phosphoryl group is left at the trailer molecule.. In terms of biological role, zinc phosphodiesterase, which displays some tRNA 3'-processing endonuclease activity. Probably involved in tRNA maturation, by removing a 3'-trailer from precursor tRNA. This Clostridium perfringens (strain ATCC 13124 / DSM 756 / JCM 1290 / NCIMB 6125 / NCTC 8237 / Type A) protein is Ribonuclease Z.